The primary structure comprises 577 residues: Cytochrome P450 714D1 (577 aa).

Over 1-3 (MES) the chain is Lumenal. Residues 4-24 (FFVFFTAAALPVVVAAAVIAG) traverse the membrane as a helical; Signal-anchor for type III membrane protein segment. Over 25-577 (LCITAAWLAR…STAPVHSSHN (553 aa)) the chain is Cytoplasmic. The segment at 315–343 (REHGGKAAPPSPPERDFLGSIIENSGGQP) is disordered. Cysteine 504 lines the heme pocket.

It belongs to the cytochrome P450 family. Requires heme as cofactor. In terms of tissue distribution, expressed in rapidly elongating or dividing tissues, including the shoot apical meristem, the intercalary meristem and elongating zones of internodes, and panicle but not in young seedlings, roots and leaves. During the heading stage, the highest expression is detected in the flowering spikelets, anthers, the divisional zone and the node of the uppermost internode.

The protein resides in the endoplasmic reticulum membrane. Its function is as follows. Catalyzes the 16alpha,17-epoxidation on non-13-hydroxylated gibberellins (GAs), including GA4, GA9, and GA12. No activity with GA1, GA20, GA53 or ent-kaurenoic acid. Reduces the biological activity of GAs. The sequence is that of Cytochrome P450 714D1 (CYP714D1) from Oryza sativa subsp. japonica (Rice).